The following is a 108-amino-acid chain: Tetrahydromethanopterin S-methyltransferase subunit B (108 aa).

The chain crosses the membrane as a helical span at residues 79–99; that stretch reads GMFFGFWVTMAILVLVTILAV.

Belongs to the MtrB family. As to quaternary structure, the complex is composed of 8 subunits; MtrA, MtrB, MtrC, MtrD, MtrE, MtrF, MtrG and MtrH.

The protein localises to the cell membrane. It catalyses the reaction 5-methyl-5,6,7,8-tetrahydromethanopterin + coenzyme M + 2 Na(+)(in) = 5,6,7,8-tetrahydromethanopterin + methyl-coenzyme M + 2 Na(+)(out). It functions in the pathway one-carbon metabolism; methanogenesis from CO(2); methyl-coenzyme M from 5,10-methylene-5,6,7,8-tetrahydromethanopterin: step 2/2. In terms of biological role, part of a complex that catalyzes the formation of methyl-coenzyme M and tetrahydromethanopterin from coenzyme M and methyl-tetrahydromethanopterin. This is an energy-conserving, sodium-ion translocating step. This is Tetrahydromethanopterin S-methyltransferase subunit B from Methanococcus maripaludis (strain C5 / ATCC BAA-1333).